We begin with the raw amino-acid sequence, 489 residues long: CDK5RAP3 protein homolog (489 aa).

This sequence belongs to the CDK5RAP3 family.

Its function is as follows. Substrate adapter of E3 ligase complexes mediating ufmylation, the covalent attachment of the ubiquitin-like modifier UFM1 to substrate proteins, and which is involved in various processes, such as ribosome recycling and reticulophagy (also called ER-phagy). The polypeptide is CDK5RAP3 protein homolog (Caenorhabditis elegans).